A 116-amino-acid polypeptide reads, in one-letter code: Large ribosomal subunit protein bL19 (116 aa).

Belongs to the bacterial ribosomal protein bL19 family.

In terms of biological role, this protein is located at the 30S-50S ribosomal subunit interface and may play a role in the structure and function of the aminoacyl-tRNA binding site. In Solidesulfovibrio magneticus (strain ATCC 700980 / DSM 13731 / RS-1) (Desulfovibrio magneticus), this protein is Large ribosomal subunit protein bL19.